The primary structure comprises 235 residues: Protein shisa-5 (235 aa).

Residues 1-26 (MAAPAPSLWTLLLLLLLLPPPPGAHG) form the signal peptide. Topologically, residues 27-105 (ELCRPFGEDN…SSFDSDPMSG (79 aa)) are extracellular. Residues 106 to 126 (FGATVAIGVTIFVVFIATIII) form a helical membrane-spanning segment. At 127–235 (CFTCSCCCLY…TYMDSLKTIP (109 aa)) the chain is on the cytoplasmic side. Residues 157–235 (APYPQPQPQP…TYMDSLKTIP (79 aa)) are disordered. Pro residues-rich tracts occupy residues 159–172 (YPQP…PSYP) and 181–211 (PMPP…PPPY).

It belongs to the shisa family. As to quaternary structure, interacts with PDCD6; PDCD6 can stabilize SHISA5. As to expression, spleen and thymus.

It localises to the endoplasmic reticulum membrane. It is found in the nucleus membrane. Its function is as follows. Can induce apoptosis in a caspase-dependent manner and plays a role in p53/TP53-dependent apoptosis. This chain is Protein shisa-5 (Shisa5), found in Mus musculus (Mouse).